A 187-amino-acid polypeptide reads, in one-letter code: Auxin-binding protein T92 (187 aa).

An N-terminal signal peptide occupies residues M1–S20. A disulfide bond links C22 and C177. Positions 78, 80, and 84 each coordinate Zn(2+). An N-linked (GlcNAc...) asparagine glycan is attached at N117. H128 is a Zn(2+) binding site. The Prevents secretion from ER signature appears at K184–L187.

Homodimer.

It is found in the endoplasmic reticulum lumen. In terms of biological role, this is probably a receptor for the plant hormone auxin. The polypeptide is Auxin-binding protein T92 (T92) (Nicotiana tabacum (Common tobacco)).